The chain runs to 342 residues: Holliday junction branch migration complex subunit RuvB (342 aa).

Residues 1–179 (MTNILSPEKS…FGIPMRLNFY (179 aa)) form a large ATPase domain (RuvB-L) region. ATP contacts are provided by residues Ile18, Arg19, Gly60, Lys63, Thr64, Thr65, 126–128 (EDF), Arg169, Tyr179, and Arg216. Thr64 lines the Mg(2+) pocket. The segment at 180 to 250 (NTGELKKVLN…ISDFGLNRLE (71 aa)) is small ATPAse domain (RuvB-S). A head domain (RuvB-H) region spans residues 253–342 (RIGLDSNDYR…HQFNIFNENE (90 aa)). Residues Arg289, Arg308, and Arg313 each contribute to the DNA site.

Belongs to the RuvB family. In terms of assembly, homohexamer. Forms an RuvA(8)-RuvB(12)-Holliday junction (HJ) complex. HJ DNA is sandwiched between 2 RuvA tetramers; dsDNA enters through RuvA and exits via RuvB. An RuvB hexamer assembles on each DNA strand where it exits the tetramer. Each RuvB hexamer is contacted by two RuvA subunits (via domain III) on 2 adjacent RuvB subunits; this complex drives branch migration. In the full resolvosome a probable DNA-RuvA(4)-RuvB(12)-RuvC(2) complex forms which resolves the HJ.

The protein localises to the cytoplasm. It carries out the reaction ATP + H2O = ADP + phosphate + H(+). Functionally, the RuvA-RuvB-RuvC complex processes Holliday junction (HJ) DNA during genetic recombination and DNA repair, while the RuvA-RuvB complex plays an important role in the rescue of blocked DNA replication forks via replication fork reversal (RFR). RuvA specifically binds to HJ cruciform DNA, conferring on it an open structure. The RuvB hexamer acts as an ATP-dependent pump, pulling dsDNA into and through the RuvAB complex. RuvB forms 2 homohexamers on either side of HJ DNA bound by 1 or 2 RuvA tetramers; 4 subunits per hexamer contact DNA at a time. Coordinated motions by a converter formed by DNA-disengaged RuvB subunits stimulates ATP hydrolysis and nucleotide exchange. Immobilization of the converter enables RuvB to convert the ATP-contained energy into a lever motion, pulling 2 nucleotides of DNA out of the RuvA tetramer per ATP hydrolyzed, thus driving DNA branch migration. The RuvB motors rotate together with the DNA substrate, which together with the progressing nucleotide cycle form the mechanistic basis for DNA recombination by continuous HJ branch migration. Branch migration allows RuvC to scan DNA until it finds its consensus sequence, where it cleaves and resolves cruciform DNA. The chain is Holliday junction branch migration complex subunit RuvB from Rickettsia conorii (strain ATCC VR-613 / Malish 7).